Here is a 396-residue protein sequence, read N- to C-terminus: Argininosuccinate synthase (396 aa).

Residues 10 to 18 and Ala37 contribute to the ATP site; that span reads AYSGGLDTS. Residues Tyr88 and Ser93 each coordinate L-citrulline. Gly118 serves as a coordination point for ATP. Positions 120, 124, and 125 each coordinate L-aspartate. Asn124 is a binding site for L-citrulline. L-citrulline-binding residues include Arg128, Ser176, Ser185, Glu261, and Tyr273.

It belongs to the argininosuccinate synthase family. Type 1 subfamily. In terms of assembly, homotetramer.

It is found in the cytoplasm. It catalyses the reaction L-citrulline + L-aspartate + ATP = 2-(N(omega)-L-arginino)succinate + AMP + diphosphate + H(+). Its pathway is amino-acid biosynthesis; L-arginine biosynthesis; L-arginine from L-ornithine and carbamoyl phosphate: step 2/3. In Nitratidesulfovibrio vulgaris (strain ATCC 29579 / DSM 644 / CCUG 34227 / NCIMB 8303 / VKM B-1760 / Hildenborough) (Desulfovibrio vulgaris), this protein is Argininosuccinate synthase.